The following is a 687-amino-acid chain: Bifunctional lysine-specific demethylase and histidyl-hydroxylase NO66 (687 aa).

The segment at Met1–Asn174 is disordered. A compositionally biased stretch (basic and acidic residues) spans Asp23–Asp32. 2 stretches are compositionally biased toward low complexity: residues Lys33–Gly50 and Lys58–Ser74. The segment covering Gly75–Glu96 has biased composition (acidic residues). Polar residues-rich tracts occupy residues Leu100–Arg116 and Arg136–Lys156. The region spanning Asn347 to Val483 is the JmjC domain. Fe cation contacts are provided by His387, Asp389, and His449.

It belongs to the ROX family. NO66 subfamily. The cofactor is Fe(2+).

Its subcellular location is the nucleus. It carries out the reaction N(6),N(6)-dimethyl-L-lysyl(36)-[histone H3] + 2 2-oxoglutarate + 2 O2 = L-lysyl(36)-[histone H3] + 2 formaldehyde + 2 succinate + 2 CO2. Its function is as follows. Oxygenase that can act as both a histone lysine demethylase and a ribosomal histidine hydroxylase. Specifically demethylates 'Lys-4' (H3K4me) and 'Lys-36' (H3K36me) of histone H3, thereby playing a central role in histone code. The chain is Bifunctional lysine-specific demethylase and histidyl-hydroxylase NO66 from Drosophila persimilis (Fruit fly).